Here is a 330-residue protein sequence, read N- to C-terminus: DNA-directed RNA polymerase subunit alpha (330 aa).

The tract at residues 1–236 is alpha N-terminal domain (alpha-NTD); the sequence is MQGSVTEFLK…EQLDAFVDLR (236 aa). The tract at residues 250 to 330 is alpha C-terminal domain (alpha-CTD); sequence FDPILLRPVD…NWPPASIAED (81 aa).

Belongs to the RNA polymerase alpha chain family. In terms of assembly, homodimer. The RNAP catalytic core consists of 2 alpha, 1 beta, 1 beta' and 1 omega subunit. When a sigma factor is associated with the core the holoenzyme is formed, which can initiate transcription.

The catalysed reaction is RNA(n) + a ribonucleoside 5'-triphosphate = RNA(n+1) + diphosphate. Its function is as follows. DNA-dependent RNA polymerase catalyzes the transcription of DNA into RNA using the four ribonucleoside triphosphates as substrates. The polypeptide is DNA-directed RNA polymerase subunit alpha (Vibrio campbellii (strain ATCC BAA-1116)).